The primary structure comprises 82 residues: Small ribosomal subunit protein bS16 (82 aa).

The protein belongs to the bacterial ribosomal protein bS16 family.

This is Small ribosomal subunit protein bS16 from Francisella philomiragia subsp. philomiragia (strain ATCC 25017 / CCUG 19701 / FSC 153 / O#319-036).